An 874-amino-acid chain; its full sequence is Alanine--tRNA ligase (874 aa).

The Zn(2+) site is built by H562, H566, C664, and H668.

This sequence belongs to the class-II aminoacyl-tRNA synthetase family. It depends on Zn(2+) as a cofactor.

Its subcellular location is the cytoplasm. The enzyme catalyses tRNA(Ala) + L-alanine + ATP = L-alanyl-tRNA(Ala) + AMP + diphosphate. Catalyzes the attachment of alanine to tRNA(Ala) in a two-step reaction: alanine is first activated by ATP to form Ala-AMP and then transferred to the acceptor end of tRNA(Ala). Also edits incorrectly charged Ser-tRNA(Ala) and Gly-tRNA(Ala) via its editing domain. The chain is Alanine--tRNA ligase from Neisseria meningitidis serogroup C / serotype 2a (strain ATCC 700532 / DSM 15464 / FAM18).